The following is a 161-amino-acid chain: Small ribosomal subunit protein uS9 (161 aa).

This sequence belongs to the universal ribosomal protein uS9 family.

The sequence is that of Small ribosomal subunit protein uS9 from Bartonella bacilliformis (strain ATCC 35685 / KC583 / Herrer 020/F12,63).